Here is a 458-residue protein sequence, read N- to C-terminus: GDP-fucose protein O-fucosyltransferase 3 (458 aa).

Residues 1-11 (MRRISVKKLCS) are Cytoplasmic-facing. A helical; Signal-anchor for type II membrane protein transmembrane segment spans residues 12 to 32 (FCLCACAFAFLVMTFQVIELL). The Lumenal segment spans residues 33–458 (GQFEQTEHRQ…TQFWREVFTD (426 aa)). 3 N-linked (GlcNAc...) asparagine glycosylation sites follow: N92, N150, and N300. The cysteines at positions 371 and 374 are disulfide-linked. N-linked (GlcNAc...) asparagine glycosylation is present at N445.

Belongs to the glycosyltransferase 10 family.

It is found in the endoplasmic reticulum membrane. It catalyses the reaction L-threonyl-[protein] + GDP-beta-L-fucose = 3-O-(alpha-L-fucosyl)-L-threonyl-[protein] + GDP + H(+). It carries out the reaction L-seryl-[protein] + GDP-beta-L-fucose = 3-O-(alpha-L-fucosyl)-L-seryl-[protein] + GDP + H(+). It participates in protein modification; protein glycosylation. Functionally, protein O-fucosyltransferase that specifically catalyzes O-fucosylation of serine or threonine residues in EMI domains of target proteins. Attaches fucose through an O-glycosidic linkage. O-fucosylation of EMI domain-containing proteins may be required for facilitating protein folding and secretion. This is GDP-fucose protein O-fucosyltransferase 3 (fut10) from Danio rerio (Zebrafish).